The following is a 173-amino-acid chain: Ribosome maturation factor RimM (173 aa).

A PRC barrel domain is found at E93–M166.

It belongs to the RimM family. As to quaternary structure, binds ribosomal protein uS19.

Its subcellular location is the cytoplasm. Functionally, an accessory protein needed during the final step in the assembly of 30S ribosomal subunit, possibly for assembly of the head region. Essential for efficient processing of 16S rRNA. May be needed both before and after RbfA during the maturation of 16S rRNA. It has affinity for free ribosomal 30S subunits but not for 70S ribosomes. The protein is Ribosome maturation factor RimM of Fusobacterium nucleatum subsp. nucleatum (strain ATCC 25586 / DSM 15643 / BCRC 10681 / CIP 101130 / JCM 8532 / KCTC 2640 / LMG 13131 / VPI 4355).